A 294-amino-acid chain; its full sequence is MTAPAPAALAPARLLDGRRIAEELLDGLKLRVDARLAAGKTRPGLAVVLVGGDPASSVYVRNKRRAAEKVGIEAFDYDLPQGTTEAELAALIDQLNTDPKIHGILIQLPLPGIPDANRLIQRIDPRKDVDGFHPQNVGHLALREFGLRPCTPRGIVTLLAHTDQPVRGRNATIVGVSNHVGRPMGLELLIAGCTVTSCHKFTPPDVLEASVRNADILVVAVGRPGLIPGEWVKPGAVVIDVGINRLDDGRLVGDVGFEAAAQRAGWITPVPGGVGPMTVATLMQNTLEAADAAG.

Residues 175-177 (GVS) and I243 contribute to the NADP(+) site.

The protein belongs to the tetrahydrofolate dehydrogenase/cyclohydrolase family. Homodimer.

The catalysed reaction is (6R)-5,10-methylene-5,6,7,8-tetrahydrofolate + NADP(+) = (6R)-5,10-methenyltetrahydrofolate + NADPH. The enzyme catalyses (6R)-5,10-methenyltetrahydrofolate + H2O = (6R)-10-formyltetrahydrofolate + H(+). It functions in the pathway one-carbon metabolism; tetrahydrofolate interconversion. Catalyzes the oxidation of 5,10-methylenetetrahydrofolate to 5,10-methenyltetrahydrofolate and then the hydrolysis of 5,10-methenyltetrahydrofolate to 10-formyltetrahydrofolate. The sequence is that of Bifunctional protein FolD from Xanthomonas campestris pv. campestris (strain 8004).